Consider the following 478-residue polypeptide: Muscarinic acetylcholine receptor M4 (478 aa).

Topologically, residues 1 to 30 (MXNFTPVNGSSANQSVRLVTAAHNHLETVE) are extracellular. N-linked (GlcNAc...) asparagine glycosylation is found at N8 and N13. A helical transmembrane segment spans residues 31–53 (MVFIATVTGSLSLVTVVGNILVM). The Cytoplasmic portion of the chain corresponds to 54-67 (LSIKVNRQLQTVNN). The chain crosses the membrane as a helical span at residues 68-88 (YFLFSLGCADLIIGAFSMNLY). Topologically, residues 89–105 (TLYIIKGYWPLGAVVCD) are extracellular. The cysteines at positions 104 and 184 are disulfide-linked. A helical transmembrane segment spans residues 106–127 (LWLALDYVVSNASVMNLLIISF). The Cytoplasmic segment spans residues 128–147 (DRYFCVTKPLTYPARRTTKM). The chain crosses the membrane as a helical span at residues 148-170 (AGLMIAAAWVLSFVLWAPAILFW). The Extracellular segment spans residues 171-192 (QFVVGKRTVPDNQCFIQFLSNP). Residues 193–215 (AVTFGTAIAAFYLPVVIMTVLYI) form a helical membrane-spanning segment. Over 216–400 (HISLASRSRV…AARERKVTRT (185 aa)) the chain is Cytoplasmic. Residues 271–333 (LEEAPPPALP…APTLQPRTLN (63 aa)) form a disordered region. Residues 274 to 285 (APPPALPPPPRP) show a composition bias toward pro residues. Positions 293 to 303 (NESSSGSATQN) are enriched in polar residues. Positions 310-332 (TELSTAEATTPALPAPTLQPRTL) are enriched in low complexity. Residues 401-421 (IFAILLAFILTWTPYNVMVLV) traverse the membrane as a helical segment. Residues 422–435 (NTFCQSCIPERVWS) are Extracellular-facing. A helical membrane pass occupies residues 436–455 (IGYWLCYVNSTINPACYALC). Over 456-478 (NATFKKTFRHLLLCQYRNIGTAR) the chain is Cytoplasmic. 3 positions are modified to phosphothreonine: T458, T462, and T476.

It belongs to the G-protein coupled receptor 1 family. Muscarinic acetylcholine receptor subfamily. CHRM4 sub-subfamily.

Its subcellular location is the cell membrane. The protein localises to the postsynaptic cell membrane. The muscarinic acetylcholine receptor mediates various cellular responses, including inhibition of adenylate cyclase, breakdown of phosphoinositides and modulation of potassium channels through the action of G proteins. Primary transducing effect is inhibition of adenylate cyclase. This Rattus norvegicus (Rat) protein is Muscarinic acetylcholine receptor M4 (Chrm4).